The chain runs to 546 residues: CTP synthase (546 aa).

The tract at residues 1–265 (MTKYVFVTGG…DEIVCHKLGI (265 aa)) is amidoligase domain. A CTP-binding site is contributed by serine 13. Residue serine 13 coordinates UTP. ATP-binding positions include 14–19 (SLGKGI) and aspartate 71. Mg(2+)-binding residues include aspartate 71 and glutamate 139. CTP is bound by residues 146–148 (DIE), 186–191 (KTKPTQ), and lysine 222. UTP is bound by residues 186–191 (KTKPTQ) and lysine 222. Residues 290-543 (DIAFVGKYVD…VKAAIARHSA (254 aa)) enclose the Glutamine amidotransferase type-1 domain. Glycine 351 contributes to the L-glutamine binding site. Cysteine 378 serves as the catalytic Nucleophile; for glutamine hydrolysis. L-glutamine is bound by residues 379–382 (LGMQ), glutamate 402, and arginine 469. Residues histidine 516 and glutamate 518 contribute to the active site.

Belongs to the CTP synthase family. As to quaternary structure, homotetramer.

The enzyme catalyses UTP + L-glutamine + ATP + H2O = CTP + L-glutamate + ADP + phosphate + 2 H(+). It carries out the reaction L-glutamine + H2O = L-glutamate + NH4(+). The catalysed reaction is UTP + NH4(+) + ATP = CTP + ADP + phosphate + 2 H(+). Its pathway is pyrimidine metabolism; CTP biosynthesis via de novo pathway; CTP from UDP: step 2/2. Its activity is regulated as follows. Allosterically activated by GTP, when glutamine is the substrate; GTP has no effect on the reaction when ammonia is the substrate. The allosteric effector GTP functions by stabilizing the protein conformation that binds the tetrahedral intermediate(s) formed during glutamine hydrolysis. Inhibited by the product CTP, via allosteric rather than competitive inhibition. Functionally, catalyzes the ATP-dependent amination of UTP to CTP with either L-glutamine or ammonia as the source of nitrogen. Regulates intracellular CTP levels through interactions with the four ribonucleotide triphosphates. The protein is CTP synthase of Azoarcus sp. (strain BH72).